Here is a 444-residue protein sequence, read N- to C-terminus: Tubulin beta 8B (444 aa).

An MREI motif motif is present at residues 1-4 (MREI). Glutamine 11, glutamate 69, serine 138, glycine 142, threonine 143, and glycine 144 together coordinate GTP. Glutamate 69 is a binding site for Mg(2+). Serine 172 is subject to Phosphoserine; by CDK1. Residues asparagine 204 and asparagine 226 each coordinate GTP. Residues 421–444 (EYQQYQDATAEEEEDEEYAEEEVA) are disordered. The span at 429 to 444 (TAEEEEDEEYAEEEVA) shows a compositional bias: acidic residues. At glutamate 436 the chain carries 5-glutamyl polyglutamate.

Belongs to the tubulin family. In terms of assembly, dimer of alpha and beta chains. A typical microtubule is a hollow water-filled tube with an outer diameter of 25 nm and an inner diameter of 15 nM. Alpha-beta heterodimers associate head-to-tail to form protofilaments running lengthwise along the microtubule wall with the beta-tubulin subunit facing the microtubule plus end conferring a structural polarity. Microtubules usually have 13 protofilaments but different protofilament numbers can be found in some organisms and specialized cells. Requires Mg(2+) as cofactor. In terms of processing, some glutamate residues at the C-terminus are polyglutamylated, resulting in polyglutamate chains on the gamma-carboxyl group. Polyglutamylation plays a key role in microtubule severing by spastin (SPAST). SPAST preferentially recognizes and acts on microtubules decorated with short polyglutamate tails: severing activity by SPAST increases as the number of glutamates per tubulin rises from one to eight, but decreases beyond this glutamylation threshold. Glutamylation is also involved in cilia motility. Some glutamate residues at the C-terminus are monoglycylated but not polyglycylated due to the absence of functional TTLL10 in human. Monoglycylation is mainly limited to tubulin incorporated into cilia and flagella axonemes, which is required for their stability and maintenance. Flagella glycylation controls sperm motility. Both polyglutamylation and monoglycylation can coexist on the same protein on adjacent residues, and lowering glycylation levels increases polyglutamylation, and reciprocally. Post-translationally, phosphorylated on Ser-172 by CDK1 during the cell cycle, from metaphase to telophase, but not in interphase. This phosphorylation inhibits tubulin incorporation into microtubules.

Its subcellular location is the cytoplasm. It is found in the cytoskeleton. Functionally, tubulin is the major constituent of microtubules, a cylinder consisting of laterally associated linear protofilaments composed of alpha- and beta-tubulin heterodimers. Microtubules grow by the addition of GTP-tubulin dimers to the microtubule end, where a stabilizing cap forms. Below the cap, tubulin dimers are in GDP-bound state, owing to GTPase activity of alpha-tubulin. In Homo sapiens (Human), this protein is Tubulin beta 8B.